Here is a 183-residue protein sequence, read N- to C-terminus: Translation initiation factor IF-3 (183 aa).

It belongs to the IF-3 family. As to quaternary structure, monomer.

It localises to the cytoplasm. Functionally, IF-3 binds to the 30S ribosomal subunit and shifts the equilibrium between 70S ribosomes and their 50S and 30S subunits in favor of the free subunits, thus enhancing the availability of 30S subunits on which protein synthesis initiation begins. The protein is Translation initiation factor IF-3 of Serratia marcescens.